The following is a 150-amino-acid chain: uncharacterized protein (150 aa).

It belongs to the Dps family.

This is an uncharacterized protein from Kitasatospora aureofaciens (Streptomyces aureofaciens).